The primary structure comprises 582 residues: uncharacterized protein (582 aa).

6 consecutive transmembrane segments (helical) span residues 17 to 37 (VAML…LPTV), 57 to 77 (LGAV…GAVY), 131 to 151 (MTAT…IMAI), 156 to 176 (ALTW…YWII), 239 to 259 (ALML…LIWF), and 271 to 291 (VGSL…VLMA). Residues 17–300 (VAMLMMLQLV…ATMTLAVLPR (284 aa)) enclose the ABC transmembrane type-1 domain. The ABC transporter domain maps to 335–571 (VRLAGATFTY…CPTYAEFAAS (237 aa)). 369–376 (GSTGSGKS) contributes to the ATP binding site.

It belongs to the ABC transporter superfamily. MsbA family.

The protein localises to the cell membrane. This is an uncharacterized protein from Mycobacterium bovis (strain ATCC BAA-935 / AF2122/97).